Reading from the N-terminus, the 282-residue chain is MALVLDGRALAKQIEENLLVRVEALKAKTGRTPILATILVGDDGASATYVRMKGNACRRVGMDSLKIELPQETTTEQLLAEIEKLNANPDVHGILLQHPVPAQIDERACFDAISLAKDVDGVTCLGFGRMAMGEAAYGSATPAGIMTILKENNIEIAGKHAVVVGRSAILGKPMAMMLLQANATVTICHSRTQNLPELVKQADIIVGAVGKAELIQKDWIKQGAVVVDAGFHPRDGGGVGDIQLQGIEEIASAYTPVPGGVGPMTITTLIRQTVEAAEKALG.

NADP(+) is bound by residues 165–167 and Ser190; that span reads GRS.

This sequence belongs to the tetrahydrofolate dehydrogenase/cyclohydrolase family. Homodimer.

It catalyses the reaction (6R)-5,10-methylene-5,6,7,8-tetrahydrofolate + NADP(+) = (6R)-5,10-methenyltetrahydrofolate + NADPH. It carries out the reaction (6R)-5,10-methenyltetrahydrofolate + H2O = (6R)-10-formyltetrahydrofolate + H(+). It participates in one-carbon metabolism; tetrahydrofolate interconversion. Its function is as follows. Catalyzes the oxidation of 5,10-methylenetetrahydrofolate to 5,10-methenyltetrahydrofolate and then the hydrolysis of 5,10-methenyltetrahydrofolate to 10-formyltetrahydrofolate. The protein is Bifunctional protein FolD of Acinetobacter baumannii (strain ATCC 17978 / DSM 105126 / CIP 53.77 / LMG 1025 / NCDC KC755 / 5377).